Here is a 507-residue protein sequence, read N- to C-terminus: Maturase K (507 aa).

The protein belongs to the intron maturase 2 family. MatK subfamily.

Its subcellular location is the plastid. The protein resides in the chloroplast. Usually encoded in the trnK tRNA gene intron. Probably assists in splicing its own and other chloroplast group II introns. This is Maturase K from Araucaria heterophylla (Norfolk Island pine).